The sequence spans 525 residues: Bestrophin homolog 15 (525 aa).

4 helical membrane-spanning segments follow: residues 36–56, 71–91, 237–257, and 273–293; these read LFMF…NLII, FDQN…VTII, LAYP…ALIA, and ILYP…VVGW.

This sequence belongs to the anion channel-forming bestrophin (TC 1.A.46) family. Calcium-sensitive chloride channel subfamily. In terms of assembly, forms oligomers.

It is found in the cell membrane. Forms chloride channels. This is Bestrophin homolog 15 (best-15) from Caenorhabditis elegans.